The chain runs to 159 residues: Ribosomal RNA large subunit methyltransferase H (159 aa).

S-adenosyl-L-methionine-binding positions include Leu76, Gly108, and 127-132; that span reads FSPMTF.

The protein belongs to the RNA methyltransferase RlmH family. As to quaternary structure, homodimer.

The protein resides in the cytoplasm. The enzyme catalyses pseudouridine(1915) in 23S rRNA + S-adenosyl-L-methionine = N(3)-methylpseudouridine(1915) in 23S rRNA + S-adenosyl-L-homocysteine + H(+). Specifically methylates the pseudouridine at position 1915 (m3Psi1915) in 23S rRNA. The sequence is that of Ribosomal RNA large subunit methyltransferase H from Alkaliphilus metalliredigens (strain QYMF).